Here is a 1292-residue protein sequence, read N- to C-terminus: DNA-directed RNA polymerase subunit beta' (1292 aa).

Zn(2+) is bound by residues cysteine 70, cysteine 72, cysteine 85, and cysteine 88. Positions 532, 534, and 536 each coordinate Mg(2+). Zn(2+) contacts are provided by cysteine 911, cysteine 987, cysteine 994, and cysteine 997.

This sequence belongs to the RNA polymerase beta' chain family. The RNAP catalytic core consists of 2 alpha, 1 beta, 1 beta' and 1 omega subunit. When a sigma factor is associated with the core the holoenzyme is formed, which can initiate transcription. Mg(2+) is required as a cofactor. Requires Zn(2+) as cofactor.

It carries out the reaction RNA(n) + a ribonucleoside 5'-triphosphate = RNA(n+1) + diphosphate. Its function is as follows. DNA-dependent RNA polymerase catalyzes the transcription of DNA into RNA using the four ribonucleoside triphosphates as substrates. In Mycoplasma genitalium (strain ATCC 33530 / DSM 19775 / NCTC 10195 / G37) (Mycoplasmoides genitalium), this protein is DNA-directed RNA polymerase subunit beta'.